The sequence spans 473 residues: Poly(A) polymerase catalytic subunit (473 aa).

Active-site residues include Asp193 and Asp195.

Belongs to the poxviridae poly(A) polymerase catalytic subunit family. Heterodimer of a large (catalytic) subunit and a small (regulatory) subunit.

The catalysed reaction is RNA(n) + ATP = RNA(n)-3'-adenine ribonucleotide + diphosphate. In terms of biological role, polymerase that creates the 3'-poly(A) tail of mRNA's. This is Poly(A) polymerase catalytic subunit (PAPL) from Crocodylus johnstoni (Australian freshwater crocodile).